A 277-amino-acid polypeptide reads, in one-letter code: NADPH-dependent 7-cyano-7-deazaguanine reductase (277 aa).

Substrate is bound at residue 86–88; that stretch reads IES. 88-89 lines the NADPH pocket; the sequence is SK. Residue cysteine 184 is the Thioimide intermediate of the active site. Aspartate 191 acts as the Proton donor in catalysis. Residue 223 to 224 coordinates substrate; sequence HE. 252–253 contributes to the NADPH binding site; that stretch reads RG.

It belongs to the GTP cyclohydrolase I family. QueF type 2 subfamily. Homodimer.

Its subcellular location is the cytoplasm. It carries out the reaction 7-aminomethyl-7-carbaguanine + 2 NADP(+) = 7-cyano-7-deazaguanine + 2 NADPH + 3 H(+). It participates in tRNA modification; tRNA-queuosine biosynthesis. In terms of biological role, catalyzes the NADPH-dependent reduction of 7-cyano-7-deazaguanine (preQ0) to 7-aminomethyl-7-deazaguanine (preQ1). In Chromohalobacter salexigens (strain ATCC BAA-138 / DSM 3043 / CIP 106854 / NCIMB 13768 / 1H11), this protein is NADPH-dependent 7-cyano-7-deazaguanine reductase.